A 1072-amino-acid chain; its full sequence is Carbamoyl phosphate synthase large chain (1072 aa).

Positions 1–401 are carboxyphosphate synthetic domain; the sequence is MPKRLDINTI…SLLKAVRSLE (401 aa). The ATP site is built by arginine 129, arginine 169, glycine 175, glycine 176, lysine 208, isoleucine 210, glutamate 215, glycine 241, valine 242, histidine 243, glutamine 284, and glutamate 298. In terms of domain architecture, ATP-grasp 1 spans 133-327; the sequence is RTLMQDLNEP…IAKLAAKIAV (195 aa). Residues glutamine 284, glutamate 298, and asparagine 300 each coordinate Mg(2+). Glutamine 284, glutamate 298, and asparagine 300 together coordinate Mn(2+). The oligomerization domain stretch occupies residues 402–546; that stretch reads LGIYHLELDH…YSTYADENES (145 aa). The interval 547-929 is carbamoyl phosphate synthetic domain; sequence IVTDRKSVVV…ALYKGLVASG (383 aa). The ATP-grasp 2 domain occupies 671–861; sequence EAALTKLGIP…MANVATKVIL (191 aa). 9 residues coordinate ATP: arginine 707, arginine 746, glutamate 752, glycine 777, valine 778, histidine 779, serine 780, glutamine 820, and glutamate 832. Positions 820, 832, and 834 each coordinate Mg(2+). Mn(2+) contacts are provided by glutamine 820, glutamate 832, and asparagine 834. Residues 930 to 1072 form the MGS-like domain; sequence INIPTHGSVI…QTKRHEVVHA (143 aa). The allosteric domain stretch occupies residues 930-1072; it reads INIPTHGSVI…QTKRHEVVHA (143 aa).

Belongs to the CarB family. Composed of two chains; the small (or glutamine) chain promotes the hydrolysis of glutamine to ammonia, which is used by the large (or ammonia) chain to synthesize carbamoyl phosphate. Tetramer of heterodimers (alpha,beta)4. The cofactor is Mg(2+). Mn(2+) serves as cofactor.

The catalysed reaction is hydrogencarbonate + L-glutamine + 2 ATP + H2O = carbamoyl phosphate + L-glutamate + 2 ADP + phosphate + 2 H(+). The enzyme catalyses hydrogencarbonate + NH4(+) + 2 ATP = carbamoyl phosphate + 2 ADP + phosphate + 2 H(+). The protein operates within amino-acid biosynthesis; L-arginine biosynthesis; carbamoyl phosphate from bicarbonate: step 1/1. Its pathway is pyrimidine metabolism; UMP biosynthesis via de novo pathway; (S)-dihydroorotate from bicarbonate: step 1/3. Functionally, large subunit of the glutamine-dependent carbamoyl phosphate synthetase (CPSase). CPSase catalyzes the formation of carbamoyl phosphate from the ammonia moiety of glutamine, carbonate, and phosphate donated by ATP, constituting the first step of 2 biosynthetic pathways, one leading to arginine and/or urea and the other to pyrimidine nucleotides. The large subunit (synthetase) binds the substrates ammonia (free or transferred from glutamine from the small subunit), hydrogencarbonate and ATP and carries out an ATP-coupled ligase reaction, activating hydrogencarbonate by forming carboxy phosphate which reacts with ammonia to form carbamoyl phosphate. In Bacillus cereus (strain ATCC 14579 / DSM 31 / CCUG 7414 / JCM 2152 / NBRC 15305 / NCIMB 9373 / NCTC 2599 / NRRL B-3711), this protein is Carbamoyl phosphate synthase large chain.